Here is a 3210-residue protein sequence, read N- to C-terminus: PF 1022-synthetase (3210 aa).

The condensation 1 stretch occupies residues 68-454 (VDDRRHAIGH…VKELDVVTAE (387 aa)). Residues 483–876 (AGDPNKAAVF…GRKDSQVKIR (394 aa)) form an adenylation 1 region. The Carrier 1 domain occupies 1010–1086 (APATGIEVKL…GLVDVIGRDP (77 aa)). At S1047 the chain carries O-(pantetheine 4'-phosphoryl)serine. Residues 1104 to 1534 (SFAQGRLWFL…RTPIAVLPLT (431 aa)) are condensation 2. The interval 1563–2023 (FRKQVAAHPH…GRMDQQVKIR (461 aa)) is adenylation 2. An S-adenosyl-L-methionine-dependent N-methyltransferase region spans residues 2081–2236 (EGWKDFFESN…YLLEVVESLV (156 aa)). Carrier domains follow at residues 2570 to 2644 (DPFV…RQGL) and 2668 to 2742 (TPSD…RLTQ). 2 positions are modified to O-(pantetheine 4'-phosphoryl)serine: S2604 and S2702. The tract at residues 2788 to 3203 (LDVYPATQMQ…KRMLEELCGN (416 aa)) is condensation 3. Residues 2976 to 3002 (VIKGNNNTTPPPPPQQQSTPSGAHHAS) form a disordered region.

This sequence belongs to the NRP synthetase family. The cofactor is pantetheine 4'-phosphate.

The catalysed reaction is 2 (R)-3-phenyllactate + 2 (R)-lactate + 4 L-leucine + 4 S-adenosyl-L-methionine + 8 ATP = PF1022A + 8 AMP + 4 S-adenosyl-L-homocysteine + 8 diphosphate + 8 H(+). It catalyses the reaction 4 (R)-3-phenyllactate + 4 L-leucine + 4 S-adenosyl-L-methionine + 8 ATP = PF1022B + 8 AMP + 4 S-adenosyl-L-homocysteine + 8 diphosphate + 8 H(+). It carries out the reaction 3 (R)-3-phenyllactate + (R)-lactate + 4 L-leucine + 4 S-adenosyl-L-methionine + 8 ATP = PF1022C + 8 AMP + 4 S-adenosyl-L-homocysteine + 8 diphosphate + 8 H(+). The enzyme catalyses (R)-3-phenyllactate + 3 (R)-lactate + 4 L-leucine + 4 S-adenosyl-L-methionine + 8 ATP = PF1022D + 8 AMP + 4 S-adenosyl-L-homocysteine + 8 diphosphate + 8 H(+). The catalysed reaction is 4 (R)-lactate + 4 L-leucine + 4 S-adenosyl-L-methionine + 8 ATP = PF1022F + 8 AMP + 4 S-adenosyl-L-homocysteine + 8 diphosphate + 8 H(+). Nonribosomal peptide synthetase that synthesizes cyclooctadepsipeptides (CODPs) PF 1022 that show powerful broad-spectrum anthelmintic activity with low toxicity in animals. Couples 4 N-methyl-L-leucines and a varying content of alpha-D-hydroxy acids (D-lactates or D-phenyllactates) in an alternative fashion. The enzyme is capable of synthesizing all known natural cyclooctadepsipeptides of the PF1022 type differing in the content of D-lactate and D-phenyllactate, using from 4 D-lactates (PF 1022F) to 4 D-phenyllactates (PF 1022B), respectively. The formation of different PF-related compounds is mainly controlled by the molar ratio of the hydroxy acids. N-methylation of the substrate L-leucine takes place after covalent binding prior to peptide bond formation. This is PF 1022-synthetase from Rosellinia sp. (Mycelia sterilia).